Reading from the N-terminus, the 297-residue chain is Probable terminal-alkyne amino-acid exporter (297 aa).

The next 9 helical transmembrane spans lie at 6 to 26 (AVWALVLTVVTWASAFPAIRV), 32 to 52 (GVAGLSLSRLTVASVALAIAA), 65 to 85 (LPMIALCGATGMSAYQVLLNW), 95 to 115 (ASLLIAIAPVFSVLLAAVFLG), 123 to 143 (IAGSAVAISGAAVIAVAGGHA), 150 to 170 (WVVLAAAVVQGVYHFATKPLL), 178 to 198 (VACYAMWAGTVFLLPLLPAMV), 212 to 232 (TVYLGLLPSAIGFVSWGYAVA), and 249 to 269 (VALVVAFVWLGEVPPPLALVG). 2 consecutive EamA domains span residues 6 to 137 (AVWA…AVIA) and 150 to 281 (WVVL…MLIN).

It belongs to the EamA transporter family.

Its subcellular location is the cell membrane. Its function is as follows. Probably involved in the export of terminal alkyne-containing amino acids, namely L-propargylglycine (Pra) and L-beta-ethynylserine, that are antibiotics synthesized by enzymes encoded in the same gene cluster. The protein is Probable terminal-alkyne amino-acid exporter of Streptantibioticus cattleyicolor (strain ATCC 35852 / DSM 46488 / JCM 4925 / NBRC 14057 / NRRL 8057) (Streptomyces cattleya).